The primary structure comprises 230 residues: Ubiquitin carboxyl-terminal hydrolase isozyme L3 (230 aa).

One can recognise a UCH catalytic domain in the interval 5-229 (RWLPLEANPE…LRFNAIALSA (225 aa)). Residues 8 to 13 (PLEANP) form an interaction with ubiquitin region. The Nucleophile role is filled by Cys-95. Position 130 is a phosphoserine (Ser-130). Residues 152–159 (AHEGQTEA) form an interaction with ubiquitin. Crossover loop which restricts access of large ubiquitin adducts to the active site region. His-169 serves as the catalytic Proton donor. Residues 219 to 224 (ELRFNA) form an interaction with ubiquitin region.

The protein belongs to the peptidase C12 family. As to quaternary structure, preferentially binds diubiquitin; the interaction does not hydrolyze diubiquitin but, in vitro, inhibits the hydrolyzing activity on other substrates. As to expression, ubiquitously expressed, with highest levels in brain, liver, heart, thymus, kidney and testis. Highly expressed in the cauda epididymidis, in meiotic pachytene spermatocytes and post-meiotic spematids. In the retina, enriched in the photoreceptor inner segment.

It localises to the cytoplasm. The catalysed reaction is Thiol-dependent hydrolysis of ester, thioester, amide, peptide and isopeptide bonds formed by the C-terminal Gly of ubiquitin (a 76-residue protein attached to proteins as an intracellular targeting signal).. Its activity is regulated as follows. Inhibited by monoubiquitin and diubiquitin. In terms of biological role, deubiquitinating enzyme (DUB) that controls levels of cellular ubiquitin through processing of ubiquitin precursors and ubiquitinated proteins. Thiol protease that recognizes and hydrolyzes a peptide bond at the C-terminal glycine of either ubiquitin or NEDD8. Has a 10-fold preference for Arg and Lys at position P3'', and exhibits a preference towards 'Lys-48'-linked ubiquitin chains. Deubiquitinates ENAC in apical compartments, thereby regulating apical membrane recycling. Indirectly increases the phosphorylation of IGFIR, AKT and FOXO1 and promotes insulin-signaling and insulin-induced adipogenesis. Required for stress-response retinal, skeletal muscle and germ cell maintenance. May be involved in working memory. Can hydrolyze UBB(+1), a mutated form of ubiquitin which is not effectively degraded by the proteasome. The polypeptide is Ubiquitin carboxyl-terminal hydrolase isozyme L3 (Uchl3) (Mus musculus (Mouse)).